The chain runs to 176 residues: Ribosome maturation factor RimP (176 aa).

The tract at residues 143 to 176 is disordered; sequence LKPQTAKKKGRQEETEDMTLELDAVSRAVPEAEI.

Belongs to the RimP family.

It is found in the cytoplasm. Functionally, required for maturation of 30S ribosomal subunits. In Chlorobium luteolum (strain DSM 273 / BCRC 81028 / 2530) (Pelodictyon luteolum), this protein is Ribosome maturation factor RimP.